A 446-amino-acid polypeptide reads, in one-letter code: NADH oxidase (446 aa).

FAD contacts are provided by residues 7–11 (GTNHA), Asp32, Cys42, Val79, 109–112 (ATGS), Lys131, and Tyr158. The active-site Proton acceptor is the His10. The active-site Redox-active is the Cys42. Cys42 carries the cysteine sulfinic acid (-SO2H) modification. Positions 159, 178, 187, and 244 each coordinate NAD(+). Residue Asp282 coordinates FAD. Ala298 serves as a coordination point for NAD(+). 3 residues coordinate FAD: Leu299, Ala300, and Ser301. Gly329 lines the NAD(+) pocket. Phe427 contacts FAD.

This sequence belongs to the class-III pyridine nucleotide-disulfide oxidoreductase family. In terms of assembly, homodimer. Requires FAD as cofactor.

It carries out the reaction 2 NADH + O2 + 2 H(+) = 2 NAD(+) + 2 H2O. Its activity is regulated as follows. Inhibited by hydrogen peroxide, sulfhydryl reagents and quinine, but not by EDTA. In terms of biological role, catalyzes the four-electron reduction of molecular oxygen to water. Active on beta-NADH, but not on alpha-NADH, beta-NADPH or alpha-NADPH. Under aerobic conditions, oxygen acts as the electron acceptor. Under anaerobic conditions, DCIP and MB can replace oxygen as the electron acceptor. In Lactococcus lactis subsp. cremoris (strain MG1363), this protein is NADH oxidase.